Here is a 388-residue protein sequence, read N- to C-terminus: Ferrochelatase (388 aa).

Positions 197 and 278 each coordinate Fe cation.

It belongs to the ferrochelatase family.

It is found in the cytoplasm. It carries out the reaction heme b + 2 H(+) = protoporphyrin IX + Fe(2+). It functions in the pathway porphyrin-containing compound metabolism; protoheme biosynthesis; protoheme from protoporphyrin-IX: step 1/1. Its function is as follows. Catalyzes the ferrous insertion into protoporphyrin IX. The sequence is that of Ferrochelatase from Thermosynechococcus vestitus (strain NIES-2133 / IAM M-273 / BP-1).